The chain runs to 514 residues: Cilia- and flagella-associated protein 53 (514 aa).

The stretch at 207-429 forms a coiled coil; sequence EDRLAKERRE…ERINEGLKEL (223 aa).

The protein belongs to the CFAP53 family. As to quaternary structure, microtubule inner protein component of sperm flagellar doublet microtubules. Interacts with PIERCE1 and PIERCE2; the interactions link outer dynein arms docking complex (ODA-DC) to the internal microtubule inner proteins (MIP) in cilium axoneme. Interacts with CCDC38. Interacts with CCDC42 and IFT88. Interacts with centriolar satellite proteins PIBF1/CEP90 and PCM1. Interacts with dyneins DNAIC1, DNAIC2 AND DNAH11 and with ODA-DC component ODAD4/TTC25. In terms of tissue distribution, expressed in trachea multiciliated cells.

The protein localises to the cytoplasm. It is found in the cytoskeleton. Its subcellular location is the cilium axoneme. It localises to the flagellum axoneme. The protein resides in the microtubule organizing center. The protein localises to the centrosome. It is found in the centriolar satellite. Its subcellular location is the spindle pole. Functionally, microtubule inner protein (MIP) part of the dynein-decorated doublet microtubules (DMTs) in cilia axoneme, which is required for motile cilia beating. Regulates motility patterns of both 9+0 and 9+2 motile cilia through differential localization and recruitment of axonemal dynein components. Required for centriolar satellite integrity and non-motile cilium assembly. Required for motile cilium formation. Through its role in beating of primary cilia, involved in the establishment of organ laterality during embryogenesis. Required for sperm flagellum biogenesis and is essential for male fertility. This Bos taurus (Bovine) protein is Cilia- and flagella-associated protein 53 (CFAP53).